Consider the following 454-residue polypeptide: tRNA modification GTPase MnmE (454 aa).

(6S)-5-formyl-5,6,7,8-tetrahydrofolate contacts are provided by R23, E80, and K120. The TrmE-type G domain occupies 216 to 377 (GMKVVIAGRP…LRDHLKQSMG (162 aa)). Residue N226 coordinates K(+). Residues 226-231 (NAGKSS), 245-251 (TAIAGTT), 270-273 (DTAG), 335-338 (NKAD), and 358-360 (SAR) each bind GTP. S230 is a Mg(2+) binding site. 3 residues coordinate K(+): T245, I247, and T250. T251 provides a ligand contact to Mg(2+). K454 provides a ligand contact to (6S)-5-formyl-5,6,7,8-tetrahydrofolate.

The protein belongs to the TRAFAC class TrmE-Era-EngA-EngB-Septin-like GTPase superfamily. TrmE GTPase family. Homodimer. Heterotetramer of two MnmE and two MnmG subunits. K(+) is required as a cofactor.

The protein localises to the cytoplasm. In terms of biological role, exhibits a very high intrinsic GTPase hydrolysis rate. Involved in the addition of a carboxymethylaminomethyl (cmnm) group at the wobble position (U34) of certain tRNAs, forming tRNA-cmnm(5)s(2)U34. This is tRNA modification GTPase MnmE from Pectobacterium atrosepticum (strain SCRI 1043 / ATCC BAA-672) (Erwinia carotovora subsp. atroseptica).